The chain runs to 529 residues: Protein PNS1 (529 aa).

Positions 1-58 (MSQQYSYGGGGGAGYPPPQMQPPNSYAQANYQGQPQGAQNQYYNGQQPHHNAPQQYYG) are disordered. Residues 1 to 84 (MSQQYSYGGG…LQPKPKFRDP (84 aa)) lie on the Cytoplasmic side of the membrane. The span at 22-48 (PPNSYAQANYQGQPQGAQNQYYNGQQP) shows a compositional bias: low complexity. The helical transmembrane segment at 85–105 (IFLVLFLLVFAGFIALSVICL) threads the bilayer. At 106–132 (RSYSNADVNVSIGRANVAGSTLNGHTA) the chain is on the extracellular side. An N-linked (GlcNAc...) asparagine glycan is attached at Asn114. Residues 133-153 (IMFMICCAVALVLSFVYILLV) traverse the membrane as a helical segment. The Cytoplasmic segment spans residues 154-158 (RTFPK). Residues 159–179 (IILEATLLLTTLSNVAFCVYL) traverse the membrane as a helical segment. Topologically, residues 180–184 (WVRGN) are extracellular. Residues 185-205 (TAAAIIFTIFAVLSVIAYFFM) form a helical membrane-spanning segment. Topologically, residues 206 to 230 (RKRIPLAKLILVTVIRTAEQYKSVY) are cytoplasmic. Residues 231–251 (VVALGGLIVETAFSAWTSWVV) form a helical membrane-spanning segment. Residues 252 to 271 (VAAYQRFEPSGQAAGSSSSN) are Extracellular-facing. N-linked (GlcNAc...) asparagine glycosylation occurs at Asn271. A helical membrane pass occupies residues 272 to 292 (ASIIGIMVFIVFAYYWISEVI). Over 293–294 (KN) the chain is Cytoplasmic. A helical membrane pass occupies residues 295-315 (IAFTTVAGIFGVAYYNANKVA). Residues 316-325 (NAAWGAFRRS) lie on the Extracellular side of the membrane. The chain crosses the membrane as a helical span at residues 326-346 (MTYSLGSICFGSLIVAILDLL). The Cytoplasmic portion of the chain corresponds to 347–362 (RALFNILQSQAASDGD). The chain crosses the membrane as a helical span at residues 363–383 (MTGQILACVAGCCVSCIQGLV). Over 384–427 (DYFNRYAYINIALYGNGYITAAKETWALLKDRGIDAIINDSLVN) the chain is Extracellular. The N-linked (GlcNAc...) asparagine glycan is linked to Asn422. A helical transmembrane segment spans residues 428 to 448 (IVFNCGAFIIGLLTALFAFIY). At 449 to 464 (EQLTNPRYLQNDAGYY) the chain is on the cytoplasmic side. Residues 465–485 (SIVLLVAFGLGFNIALSVGAG) traverse the membrane as a helical segment. The Extracellular portion of the chain corresponds to 486 to 529 (SIASGVSTYFVALAEDPYILQGKNPELFEMIRQQYPQVVQGVNH).

It belongs to the CTL (choline transporter-like) family.

It is found in the cell membrane. Its function is as follows. Probably involved in transport through the plasma membrane. The protein is Protein PNS1 (PNS1) of Mycosarcoma maydis (Corn smut fungus).